The chain runs to 214 residues: MSKPPPKPAKPGQVKVYRALFTFDPRTPDELYFEEGDILYISDTSDSNWWKGTCRGRTGLIPSNYVAEQAESIDNPMHEAAKRGNLSWLRECLDNKVGINGLDKAGNTSLYWACHGGHKDVVEILLSQPNCELNQQNKLGDTPLHAAAWKGYSDIVEMLLNKNARTDVVNNEKKTALDMATNAQCASLLKRKLGGVILRTHSNAEEYLDDEDSD.

One can recognise an SH3 domain in the interval 12–71 (GQVKVYRALFTFDPRTPDELYFEEGDILYISDTSDSNWWKGTCRGRTGLIPSNYVAEQAE). ANK repeat units lie at residues 72-101 (SIDN…GING), 105-135 (AGNT…ELNQ), and 139-168 (LGDT…RTDV).

Its subcellular location is the cytoplasm. Its function is as follows. Induces bone resorption, acting probably through a signaling cascade which results in the secretion of factor(s) enhancing osteoclast formation and activity. In Danio rerio (Zebrafish), this protein is Osteoclast-stimulating factor 1 (ostf1).